Reading from the N-terminus, the 287-residue chain is Large ribosomal subunit protein uL2 (287 aa).

Positions 221 to 287 are disordered; it reads RGSVMNPCDH…SKRSRGGRDS (67 aa). Residues 258-287 are compositionally biased toward basic residues; the sequence is KTRKKNKPSNKLVVRRRRRVSKRSRGGRDS.

This sequence belongs to the universal ribosomal protein uL2 family. In terms of assembly, part of the 50S ribosomal subunit. Forms a bridge to the 30S subunit in the 70S ribosome.

One of the primary rRNA binding proteins. Required for association of the 30S and 50S subunits to form the 70S ribosome, for tRNA binding and peptide bond formation. It has been suggested to have peptidyltransferase activity; this is somewhat controversial. Makes several contacts with the 16S rRNA in the 70S ribosome. This chain is Large ribosomal subunit protein uL2, found in Prochlorococcus marinus (strain AS9601).